We begin with the raw amino-acid sequence, 151 residues long: UPF0208 membrane protein YfbV (151 aa).

Residues 1 to 45 (MSTPDNRSVNFFSLFCRGQHYSKTWPLEKRLAPVFVENRVIKMTR) lie on the Cytoplasmic side of the membrane. A helical transmembrane segment spans residues 46–65 (YAIRFMPPIAVFTLCWQIAL). Residues 66–68 (GGQ) lie on the Periplasmic side of the membrane. The chain crosses the membrane as a helical span at residues 69–91 (LGPAVATALFALSLPMQGLWWLG). Topologically, residues 92–151 (KRSVTPLPPAILNWFYEVRGKLQESGQVLAPVEGKPDYQALADTLKRAFKQLDKTFLDDL) are cytoplasmic.

Belongs to the UPF0208 family.

The protein localises to the cell inner membrane. The protein is UPF0208 membrane protein YfbV (yfbV) of Escherichia coli O6:H1 (strain CFT073 / ATCC 700928 / UPEC).